The chain runs to 196 residues: Ribonuclease HII (196 aa).

Residues 9–196 (RLVAGVDEVG…KPVRRALGIE (188 aa)) form the RNase H type-2 domain. 3 residues coordinate a divalent metal cation: D15, E16, and D107.

This sequence belongs to the RNase HII family. The cofactor is Mn(2+). Mg(2+) serves as cofactor.

The protein resides in the cytoplasm. The enzyme catalyses Endonucleolytic cleavage to 5'-phosphomonoester.. In terms of biological role, endonuclease that specifically degrades the RNA of RNA-DNA hybrids. The protein is Ribonuclease HII of Aeromonas hydrophila subsp. hydrophila (strain ATCC 7966 / DSM 30187 / BCRC 13018 / CCUG 14551 / JCM 1027 / KCTC 2358 / NCIMB 9240 / NCTC 8049).